The primary structure comprises 335 residues: DNA-directed RNA polymerase subunit alpha (335 aa).

The alpha N-terminal domain (alpha-NTD) stretch occupies residues 1-233 (MVREKIRVST…DLLIPFLHAE (233 aa)). Residues 263–335 (KKKIALKFIF…HFVIDLKNKR (73 aa)) form an alpha C-terminal domain (alpha-CTD) region.

It belongs to the RNA polymerase alpha chain family. As to quaternary structure, in plastids the minimal PEP RNA polymerase catalytic core is composed of four subunits: alpha, beta, beta', and beta''. When a (nuclear-encoded) sigma factor is associated with the core the holoenzyme is formed, which can initiate transcription.

Its subcellular location is the plastid. It is found in the chloroplast. The catalysed reaction is RNA(n) + a ribonucleoside 5'-triphosphate = RNA(n+1) + diphosphate. DNA-dependent RNA polymerase catalyzes the transcription of DNA into RNA using the four ribonucleoside triphosphates as substrates. The sequence is that of DNA-directed RNA polymerase subunit alpha from Spinacia oleracea (Spinach).